Consider the following 358-residue polypeptide: Histidinol-phosphate aminotransferase (358 aa).

At Lys-217 the chain carries N6-(pyridoxal phosphate)lysine.

It belongs to the class-II pyridoxal-phosphate-dependent aminotransferase family. Histidinol-phosphate aminotransferase subfamily. Homodimer. Pyridoxal 5'-phosphate serves as cofactor.

It catalyses the reaction L-histidinol phosphate + 2-oxoglutarate = 3-(imidazol-4-yl)-2-oxopropyl phosphate + L-glutamate. The protein operates within amino-acid biosynthesis; L-histidine biosynthesis; L-histidine from 5-phospho-alpha-D-ribose 1-diphosphate: step 7/9. This Ruminiclostridium cellulolyticum (strain ATCC 35319 / DSM 5812 / JCM 6584 / H10) (Clostridium cellulolyticum) protein is Histidinol-phosphate aminotransferase.